Here is a 216-residue protein sequence, read N- to C-terminus: Large ribosomal subunit protein uL3 (216 aa).

A disordered region spans residues 136-155 (GVSISHRSHGSTGQRQDPGK). Residue Q151 is modified to N5-methylglutamine.

This sequence belongs to the universal ribosomal protein uL3 family. Part of the 50S ribosomal subunit. Forms a cluster with proteins L14 and L19. Post-translationally, methylated by PrmB.

Functionally, one of the primary rRNA binding proteins, it binds directly near the 3'-end of the 23S rRNA, where it nucleates assembly of the 50S subunit. This chain is Large ribosomal subunit protein uL3, found in Rickettsia prowazekii (strain Madrid E).